The chain runs to 503 residues: Carboxyl-terminal PDZ ligand of neuronal nitric oxide synthase protein (503 aa).

The 166-residue stretch at Phe-26–Gly-191 folds into the PID domain. Positions His-170–Asp-212 are disordered. A phosphoserine mark is found at Ser-183, Ser-187, Ser-190, and Ser-262. A coiled-coil region spans residues Ala-318–Leu-359. Residues Ser-367, Ser-370, Ser-397, and Ser-413 each carry the phosphoserine modification. An interaction with NOS1 region spans residues Gln-491 to Val-503. The PDZ-binding signature appears at Ile-501–Val-503.

As to quaternary structure, interacts with the PDZ domain of NOS1 or the second PDZ domain of DLG4 through its C-terminus. Interacts with RASD1 and SYN1, SYN2 and SYN3 via its PID domain. Forms a ternary complex with NOS1 and SYN1. Forms a ternary complex with NOS1 and RASD1.

It localises to the cell projection. Its subcellular location is the filopodium. The protein resides in the podosome. Its function is as follows. Adapter protein involved in neuronal nitric-oxide (NO) synthesis regulation via its association with nNOS/NOS1. The complex formed with NOS1 and synapsins is necessary for specific NO and synapsin functions at a presynaptic level. Mediates an indirect interaction between NOS1 and RASD1 leading to enhance the ability of NOS1 to activate RASD1. Competes with DLG4 for interaction with NOS1, possibly affecting NOS1 activity by regulating the interaction between NOS1 and DLG4. In kidney podocytes, plays a role in podosomes and filopodia formation through CDC42 activation. The polypeptide is Carboxyl-terminal PDZ ligand of neuronal nitric oxide synthase protein (Mus musculus (Mouse)).